We begin with the raw amino-acid sequence, 247 residues long: 5'-nucleotidase SurE (247 aa).

4 residues coordinate a divalent metal cation: D8, D9, S39, and N91.

The protein belongs to the SurE nucleotidase family. Requires a divalent metal cation as cofactor.

It localises to the cytoplasm. It catalyses the reaction a ribonucleoside 5'-phosphate + H2O = a ribonucleoside + phosphate. Functionally, nucleotidase that shows phosphatase activity on nucleoside 5'-monophosphates. This chain is 5'-nucleotidase SurE, found in Nitrosomonas europaea (strain ATCC 19718 / CIP 103999 / KCTC 2705 / NBRC 14298).